Consider the following 706-residue polypeptide: Protein-glutamine gamma-glutamyltransferase 6 (706 aa).

Ca(2+)-binding residues include alanine 223, asparagine 226, and asparagine 228. Cysteine 274 is an active-site residue. The Ca(2+) site is built by aspartate 303, aspartate 305, asparagine 307, serine 309, and aspartate 327. Residues histidine 333 and aspartate 356 contribute to the active site. Asparagine 396, threonine 417, glutamate 445, and glutamate 450 together coordinate Ca(2+).

It belongs to the transglutaminase superfamily. Transglutaminase family. Requires Ca(2+) as cofactor.

It localises to the cytoplasm. The catalysed reaction is L-glutaminyl-[protein] + L-lysyl-[protein] = [protein]-L-lysyl-N(6)-5-L-glutamyl-[protein] + NH4(+). In terms of biological role, catalyzes the cross-linking of proteins and the conjugation of polyamines to proteins. This Homo sapiens (Human) protein is Protein-glutamine gamma-glutamyltransferase 6 (TGM6).